The sequence spans 303 residues: Polyisoprenyl-teichoic acid--peptidoglycan teichoic acid transferase TagU (303 aa).

Residues 1–4 (MKKK) lie on the Cytoplasmic side of the membrane. The helical; Signal-anchor for type II membrane protein transmembrane segment at 5 to 25 (ILFWVLGILGVLIIGGGIYAY) threads the bilayer. The Extracellular portion of the chain corresponds to 26–303 (NVYSSVSNTL…KLRSHLEVTK (278 aa)).

The protein belongs to the LytR/CpsA/Psr (LCP) family.

The protein resides in the cell membrane. Its pathway is cell wall biogenesis. In terms of biological role, may catalyze the final step in cell wall teichoic acid biosynthesis, the transfer of the anionic cell wall polymers (APs) from their lipid-linked precursor to the cell wall peptidoglycan (PG). This chain is Polyisoprenyl-teichoic acid--peptidoglycan teichoic acid transferase TagU, found in Bacillus cereus (strain AH820).